The chain runs to 160 residues: Eukaryotic translation initiation factor 5A-2 (160 aa).

Residues 1 to 12 (MSDEEHHFESKA) are compositionally biased toward basic and acidic residues. Residues 1–21 (MSDEEHHFESKADAGASKTFP) are disordered. Residue Lys-52 is modified to Hypusine.

The protein belongs to the eIF-5A family. In terms of processing, lys-52 undergoes hypusination, a unique post-translational modification that consists in the addition of a butylamino group from spermidine to lysine side chain, leading to the formation of the unusual amino acid hypusine. eIF-5As are the only known proteins to undergo this modification, which is essential for their function.

Its function is as follows. Translation factor that promotes translation elongation and termination, particularly upon ribosome stalling at specific amino acid sequence contexts. Binds between the exit (E) and peptidyl (P) site of the ribosome and promotes rescue of stalled ribosome: specifically required for efficient translation of polyproline-containing peptides as well as other motifs that stall the ribosome. Acts as a ribosome quality control (RQC) cofactor by joining the RQC complex to facilitate peptidyl transfer during CAT tailing step. This chain is Eukaryotic translation initiation factor 5A-2, found in Solanum lycopersicum (Tomato).